Here is a 192-residue protein sequence, read N- to C-terminus: CASP-like protein 2U1 (192 aa).

Over Met-1 to Gly-11 the chain is Cytoplasmic. A helical membrane pass occupies residues Leu-12–Leu-32. The Extracellular portion of the chain corresponds to Leu-33–Ser-58. A helical transmembrane segment spans residues Gly-59 to Val-79. Residues Ser-80 to Arg-96 lie on the Cytoplasmic side of the membrane. A helical membrane pass occupies residues Trp-97–Ala-117. Residues Thr-118–His-145 are Extracellular-facing. Residues Met-146–Val-166 traverse the membrane as a helical segment. The Cytoplasmic segment spans residues Ser-167–Thr-192.

The protein belongs to the Casparian strip membrane proteins (CASP) family. Homodimer and heterodimers.

Its subcellular location is the cell membrane. The sequence is that of CASP-like protein 2U1 from Adiantum capillus-veneris (Maidenhair fern).